The primary structure comprises 454 residues: tRNA modification GTPase MnmE (454 aa).

Residues arginine 23, glutamate 80, and lysine 120 each coordinate (6S)-5-formyl-5,6,7,8-tetrahydrofolate. Positions 216–377 (GMKVVIAGRP…LRDHLKQSMG (162 aa)) constitute a TrmE-type G domain. A K(+)-binding site is contributed by asparagine 226. GTP contacts are provided by residues 226–231 (NAGKSS), 245–251 (TDIAGTT), 270–273 (DTAG), 335–338 (NKAD), and 358–360 (SAR). Serine 230 serves as a coordination point for Mg(2+). Positions 245, 247, and 250 each coordinate K(+). Residue threonine 251 coordinates Mg(2+). Position 454 (lysine 454) interacts with (6S)-5-formyl-5,6,7,8-tetrahydrofolate.

It belongs to the TRAFAC class TrmE-Era-EngA-EngB-Septin-like GTPase superfamily. TrmE GTPase family. Homodimer. Heterotetramer of two MnmE and two MnmG subunits. It depends on K(+) as a cofactor.

The protein localises to the cytoplasm. Functionally, exhibits a very high intrinsic GTPase hydrolysis rate. Involved in the addition of a carboxymethylaminomethyl (cmnm) group at the wobble position (U34) of certain tRNAs, forming tRNA-cmnm(5)s(2)U34. The sequence is that of tRNA modification GTPase MnmE from Yersinia pestis bv. Antiqua (strain Antiqua).